We begin with the raw amino-acid sequence, 541 residues long: Zinc finger protein 329 (541 aa).

S50 bears the Phosphoserine mark. 12 C2H2-type zinc fingers span residues 203–225 (YRCT…HRTH), 231–253 (YTCN…QRIH), 259–281 (YECS…QRIH), 287–309 (YECL…QRTH), 315–337 (YRCN…LRIH), 343–365 (YECS…ERTH), 371–393 (FECA…QKIH), 399–421 (YECK…QRIH), 427–449 (YGCN…QRTH), 455–477 (YECN…QRIH), 483–505 (YQCP…QRLH), and 511–533 (SRCP…QRAH).

This sequence belongs to the krueppel C2H2-type zinc-finger protein family.

It is found in the nucleus. Functionally, may be involved in transcriptional regulation. The protein is Zinc finger protein 329 (ZNF329) of Homo sapiens (Human).